The chain runs to 420 residues: MTKWKRANPNGTRDYLFEECTLIEEVEQKLRRTFLERGYEEIRTPTIEFYDVFAFQSRPIDEEKMYKFFDEKGRIIVLRPDMTIPLARVVGTQRCDTPLKVTYSGNVFRANESLAGKYNEIVQSGIEVIGIDNVRAEIECVISVIQSLQKLKVQSFTIEIGQVQLYKCIVKKLSIHEEEEKVLRTYIESKNYAALSNFIRDKKLDRCDETVKLLEKLPRLFGNLEVIEEAEKLASSNEMKMAITRVKEIYEAIEKLGYGSYISIDLGMIQHLDYYTGVIFKGYIYEIGEEIVSGGRYDELIGNFGEMLPAVGLAVQVNQIVKALQEQQEPYERKRIDIMIHYELNRLAEAERLRNLLQKDGKKVALSLFSNLNDTFQFARKNQIVTVVEAKSESLVEYVWKEKWVVQKEGETSCVTFKLR.

The protein belongs to the class-II aminoacyl-tRNA synthetase family. HisZ subfamily. In terms of assembly, heteromultimer composed of HisG and HisZ subunits.

The protein resides in the cytoplasm. It participates in amino-acid biosynthesis; L-histidine biosynthesis; L-histidine from 5-phospho-alpha-D-ribose 1-diphosphate: step 1/9. Required for the first step of histidine biosynthesis. May allow the feedback regulation of ATP phosphoribosyltransferase activity by histidine. In Bacillus thuringiensis subsp. konkukian (strain 97-27), this protein is ATP phosphoribosyltransferase regulatory subunit.